A 362-amino-acid polypeptide reads, in one-letter code: Phosphoserine aminotransferase (362 aa).

L-glutamate contacts are provided by Ser-9 and Arg-42. Pyridoxal 5'-phosphate is bound by residues 76 to 77 (GR), Trp-102, Thr-153, Asp-174, and Gln-197. Position 198 is an N6-(pyridoxal phosphate)lysine (Lys-198). 239–240 (NT) contacts pyridoxal 5'-phosphate.

It belongs to the class-V pyridoxal-phosphate-dependent aminotransferase family. SerC subfamily. As to quaternary structure, homodimer. Pyridoxal 5'-phosphate is required as a cofactor.

Its subcellular location is the cytoplasm. It carries out the reaction O-phospho-L-serine + 2-oxoglutarate = 3-phosphooxypyruvate + L-glutamate. It catalyses the reaction 4-(phosphooxy)-L-threonine + 2-oxoglutarate = (R)-3-hydroxy-2-oxo-4-phosphooxybutanoate + L-glutamate. It functions in the pathway amino-acid biosynthesis; L-serine biosynthesis; L-serine from 3-phospho-D-glycerate: step 2/3. Its pathway is cofactor biosynthesis; pyridoxine 5'-phosphate biosynthesis; pyridoxine 5'-phosphate from D-erythrose 4-phosphate: step 3/5. Functionally, catalyzes the reversible conversion of 3-phosphohydroxypyruvate to phosphoserine and of 3-hydroxy-2-oxo-4-phosphonooxybutanoate to phosphohydroxythreonine. In Salmonella arizonae (strain ATCC BAA-731 / CDC346-86 / RSK2980), this protein is Phosphoserine aminotransferase.